The sequence spans 231 residues: Large ribosomal subunit protein uL1 (231 aa).

This sequence belongs to the universal ribosomal protein uL1 family. In terms of assembly, part of the 50S ribosomal subunit.

Functionally, binds directly to 23S rRNA. The L1 stalk is quite mobile in the ribosome, and is involved in E site tRNA release. In terms of biological role, protein L1 is also a translational repressor protein, it controls the translation of the L11 operon by binding to its mRNA. The polypeptide is Large ribosomal subunit protein uL1 (Acinetobacter baumannii (strain AB0057)).